Here is a 349-residue protein sequence, read N- to C-terminus: N-acetyl-gamma-glutamyl-phosphate reductase (349 aa).

The active site involves C153.

The protein belongs to the NAGSA dehydrogenase family. Type 1 subfamily.

It is found in the cytoplasm. The catalysed reaction is N-acetyl-L-glutamate 5-semialdehyde + phosphate + NADP(+) = N-acetyl-L-glutamyl 5-phosphate + NADPH + H(+). It functions in the pathway amino-acid biosynthesis; L-arginine biosynthesis; N(2)-acetyl-L-ornithine from L-glutamate: step 3/4. Catalyzes the NADPH-dependent reduction of N-acetyl-5-glutamyl phosphate to yield N-acetyl-L-glutamate 5-semialdehyde. The sequence is that of N-acetyl-gamma-glutamyl-phosphate reductase from Magnetococcus marinus (strain ATCC BAA-1437 / JCM 17883 / MC-1).